The sequence spans 109 residues: Thioredoxin (109 aa).

Positions 2–109 constitute a Thioredoxin domain; the sequence is TNCIVELTDG…LKDFLNLYLK (108 aa). Residues Cys33 and Cys36 are joined by a disulfide bond.

The protein belongs to the thioredoxin family.

Functionally, participates in various redox reactions through the reversible oxidation of its active center dithiol to a disulfide and catalyzes dithiol-disulfide exchange reactions. This is Thioredoxin (trxA) from Buchnera aphidicola subsp. Baizongia pistaciae (strain Bp).